The chain runs to 129 residues: MPTYNQLVRFGRKSKIRKTKSPALESNPFKSGVCLVVKTVTPKKPNSALRKIATVRLSNKRTVNAYIPGEKHSVKEHDRVLVRGGQVPDLPGVKYHIVLGAYDIAGVKGRKQGRSRYGATRKQVAATKK.

This sequence belongs to the universal ribosomal protein uS12 family. As to quaternary structure, part of the 30S ribosomal subunit. Contacts proteins S8 and S17. May interact with IF1 in the 30S initiation complex.

Functionally, with S4 and S5 plays an important role in translational accuracy. Its function is as follows. Interacts with and stabilizes bases of the 16S rRNA that are involved in tRNA selection in the A site and with the mRNA backbone. Located at the interface of the 30S and 50S subunits, it traverses the body of the 30S subunit contacting proteins on the other side and probably holding the rRNA structure together. The combined cluster of proteins S8, S12 and S17 appears to hold together the shoulder and platform of the 30S subunit. In Rickettsia typhi (strain ATCC VR-144 / Wilmington), this protein is Small ribosomal subunit protein uS12.